The primary structure comprises 252 residues: 3-dehydroquinate dehydratase (252 aa).

3-dehydroquinate contacts are provided by residues E46 to R48 and R82. H143 serves as the catalytic Proton donor/acceptor. The active-site Schiff-base intermediate with substrate is K170. 3-dehydroquinate is bound by residues R212, S231, and Q235.

It belongs to the type-I 3-dehydroquinase family. Homodimer.

The enzyme catalyses 3-dehydroquinate = 3-dehydroshikimate + H2O. It participates in metabolic intermediate biosynthesis; chorismate biosynthesis; chorismate from D-erythrose 4-phosphate and phosphoenolpyruvate: step 3/7. In terms of biological role, involved in the third step of the chorismate pathway, which leads to the biosynthesis of aromatic amino acids. Catalyzes the cis-dehydration of 3-dehydroquinate (DHQ) and introduces the first double bond of the aromatic ring to yield 3-dehydroshikimate. The protein is 3-dehydroquinate dehydratase of Listeria monocytogenes serotype 4a (strain HCC23).